The chain runs to 1430 residues: Gag-Pol polyprotein (1430 aa).

Glycine 2 carries the N-myristoyl glycine; by host lipid modification. The interaction with Gp41 stretch occupies residues 7–31 (VLSGGKLDAWEKIRLRPGGKKKYKL). Residues 8–43 (LSGGKLDAWEKIRLRPGGKKKYKLKHLVWASRELER) are interaction with host CALM1. An interaction with host AP3D1 region spans residues 12–19 (KLDAWEKI). The interaction with membrane phosphatidylinositol 4,5-bisphosphate and RNA stretch occupies residues 14 to 33 (DAWEKIRLRPGGKKKYKLKH). A Nuclear export signal motif is present at residues 16–22 (WEKIRLR). The Nuclear localization signal signature appears at 26-32 (KKKYKLK). Positions 73-77 (EEIKS) are interaction with membrane phosphatidylinositol 4,5-bisphosphate. Tyrosine 128 is modified (phosphotyrosine; by host). The interaction with human PPIA/CYPA and NUP153 stretch occupies residues 185 to 223 (NTVGGHQAAMQMLKDTINDEAAEWDRLHPVHAGPIPPGQ). The segment at 273–359 (YSPVSILDIR…GGPSHKARIL (87 aa)) is dimerization/Multimerization of capsid protein p24. CCHC-type zinc fingers lie at residues 385–402 (VKCF…NCRA) and 406–423 (KGCW…DCTE). The interval 439–480 (EAREFSSEQTRANSPTSRELRVRGGDNPLSEAGDQRQGTEPS) is disordered. The span at 445 to 455 (SEQTRANSPTS) shows a compositional bias: polar residues. Residues 484–488 (PQITL) form a dimerization of protease region. Residues 503 to 572 (REALLDTGAD…TPVNIIGRNL (70 aa)) enclose the Peptidase A2 domain. The active-site For protease activity; shared with dimeric partner is the aspartate 508. Dimerization of protease stretches follow at residues 532-538 (GIGGFIK) and 571-583 (NLLT…LNFP). A Reverse transcriptase domain is found at 626-816 (EGKISKIGPE…PPFLWMGYEL (191 aa)). Positions 692, 767, and 768 each coordinate Mg(2+). The interval 809 to 817 (FLWMGYELH) is RT 'primer grip'. The Tryptophan repeat motif signature appears at 980–996 (WETWWTEYWQATWIPEW). The 124-residue stretch at 1016–1139 (IVGAETFYVD…VDKLVSAGIR (124 aa)) folds into the RNase H type-1 domain. 4 residues coordinate Mg(2+): aspartate 1025, glutamate 1060, aspartate 1080, and aspartate 1131. The segment at 1145-1186 (DGIDKAQEEHEKYHNNWRAMASDFNLPPIVAKEIVASCDKCQ) adopts an Integrase-type zinc-finger fold. Residues histidine 1154, histidine 1158, cysteine 1182, and cysteine 1185 each contribute to the Zn(2+) site. The Integrase catalytic domain occupies 1196–1346 (VDCSPGIWQL…SAGERIVDII (151 aa)). Mg(2+)-binding residues include aspartate 1206, aspartate 1258, and glutamate 1294. The integrase-type DNA-binding region spans 1365–1412 (FRVYYRDSREPIWKGPAKLLWKGEGAVVIQDNSEIKVVPRRKAKIIRD).

In terms of assembly, homotrimer; further assembles as hexamers of trimers. Interacts with gp41 (via C-terminus). Interacts with host CALM1; this interaction induces a conformational change in the Matrix protein, triggering exposure of the myristate group. Interacts with host AP3D1; this interaction allows the polyprotein trafficking to multivesicular bodies during virus assembly. Part of the pre-integration complex (PIC) which is composed of viral genome, matrix protein, Vpr and integrase. Homodimer; the homodimer further multimerizes as homohexamers or homopentamers. Interacts with human PPIA/CYPA; This interaction stabilizes the capsid. Interacts with human NUP153. Interacts with host PDZD8; this interaction stabilizes the capsid. Interacts with monkey TRIM5; this interaction destabilizes the capsid. As to quaternary structure, homodimer, whose active site consists of two apposed aspartic acid residues. In terms of assembly, heterodimer of p66 RT and p51 RT (RT p66/p51). Heterodimerization of RT is essential for DNA polymerase activity. The overall folding of the subdomains is similar in p66 RT and p51 RT but the spatial arrangements of the subdomains are dramatically different. Homotetramer; may further associate as a homohexadecamer. Part of the pre-integration complex (PIC) which is composed of viral genome, matrix protein, Vpr and integrase. Interacts with human SMARCB1/INI1 and human PSIP1/LEDGF isoform 1. Interacts with human KPNA3; this interaction might play a role in nuclear import of the pre-integration complex. Interacts with human NUP153; this interaction might play a role in nuclear import of the pre-integration complex. The cofactor is Mg(2+). Specific enzymatic cleavages by the viral protease yield mature proteins. The protease is released by autocatalytic cleavage. The polyprotein is cleaved during and after budding, this process is termed maturation. Proteolytic cleavage of p66 RT removes the RNase H domain to yield the p51 RT subunit. Nucleocapsid protein p7 might be further cleaved after virus entry. Post-translationally, tyrosine phosphorylated presumably in the virion by a host kinase. Phosphorylation is apparently not a major regulator of membrane association. In terms of processing, phosphorylated possibly by host MAPK1; this phosphorylation is necessary for Pin1-mediated virion uncoating. Methylated by host PRMT6, impairing its function by reducing RNA annealing and the initiation of reverse transcription.

Its subcellular location is the host cell membrane. The protein resides in the host endosome. It is found in the host multivesicular body. The protein localises to the virion membrane. It localises to the host nucleus. Its subcellular location is the host cytoplasm. The protein resides in the virion. The enzyme catalyses Specific for a P1 residue that is hydrophobic, and P1' variable, but often Pro.. It carries out the reaction Endohydrolysis of RNA in RNA/DNA hybrids. Three different cleavage modes: 1. sequence-specific internal cleavage of RNA. Human immunodeficiency virus type 1 and Moloney murine leukemia virus enzymes prefer to cleave the RNA strand one nucleotide away from the RNA-DNA junction. 2. RNA 5'-end directed cleavage 13-19 nucleotides from the RNA end. 3. DNA 3'-end directed cleavage 15-20 nucleotides away from the primer terminus.. It catalyses the reaction 3'-end directed exonucleolytic cleavage of viral RNA-DNA hybrid.. The catalysed reaction is DNA(n) + a 2'-deoxyribonucleoside 5'-triphosphate = DNA(n+1) + diphosphate. Protease: The viral protease is inhibited by many synthetic protease inhibitors (PIs), such as amprenavir, atazanavir, indinavir, loprinavir, nelfinavir, ritonavir and saquinavir. Use of protease inhibitors in tritherapy regimens permit more ambitious therapeutic strategies. Reverse transcriptase/ribonuclease H: RT can be inhibited either by nucleoside RT inhibitors (NRTIs) or by non nucleoside RT inhibitors (NNRTIs). NRTIs act as chain terminators, whereas NNRTIs inhibit DNA polymerization by binding a small hydrophobic pocket near the RT active site and inducing an allosteric change in this region. Classical NRTIs are abacavir, adefovir (PMEA), didanosine (ddI), lamivudine (3TC), stavudine (d4T), tenofovir (PMPA), zalcitabine (ddC), and zidovudine (AZT). Classical NNRTIs are atevirdine (BHAP U-87201E), delavirdine, efavirenz (DMP-266), emivirine (I-EBU), and nevirapine (BI-RG-587). The tritherapies used as a basic effective treatment of AIDS associate two NRTIs and one NNRTI. Its function is as follows. Mediates, with Gag polyprotein, the essential events in virion assembly, including binding the plasma membrane, making the protein-protein interactions necessary to create spherical particles, recruiting the viral Env proteins, and packaging the genomic RNA via direct interactions with the RNA packaging sequence (Psi). Gag-Pol polyprotein may regulate its own translation, by the binding genomic RNA in the 5'-UTR. At low concentration, the polyprotein would promote translation, whereas at high concentration, the polyprotein would encapsidate genomic RNA and then shut off translation. In terms of biological role, targets the polyprotein to the plasma membrane via a multipartite membrane-binding signal, that includes its myristoylated N-terminus. Matrix protein is part of the pre-integration complex. Implicated in the release from host cell mediated by Vpu. Binds to RNA. Forms the conical core that encapsulates the genomic RNA-nucleocapsid complex in the virion. Most core are conical, with only 7% tubular. The core is constituted by capsid protein hexamer subunits. The core is disassembled soon after virion entry. Host restriction factors such as TRIM5-alpha or TRIMCyp bind retroviral capsids and cause premature capsid disassembly, leading to blocks in reverse transcription. Capsid restriction by TRIM5 is one of the factors which restricts HIV-1 to the human species. Host PIN1 apparently facilitates the virion uncoating. On the other hand, interactions with PDZD8 or CYPA stabilize the capsid. Functionally, encapsulates and protects viral dimeric unspliced genomic RNA (gRNA). Binds these RNAs through its zinc fingers. Acts as a nucleic acid chaperone which is involved in rearangement of nucleic acid secondary structure during gRNA retrotranscription. Also facilitates template switch leading to recombination. As part of the polyprotein, participates in gRNA dimerization, packaging, tRNA incorporation and virion assembly. Its function is as follows. Aspartyl protease that mediates proteolytic cleavages of Gag and Gag-Pol polyproteins during or shortly after the release of the virion from the plasma membrane. Cleavages take place as an ordered, step-wise cascade to yield mature proteins. This process is called maturation. Displays maximal activity during the budding process just prior to particle release from the cell. Also cleaves Nef and Vif, probably concomitantly with viral structural proteins on maturation of virus particles. Hydrolyzes host EIF4GI and PABP1 in order to shut off the capped cellular mRNA translation. The resulting inhibition of cellular protein synthesis serves to ensure maximal viral gene expression and to evade host immune response. Also mediates cleavage of host YTHDF3. Mediates cleavage of host CARD8, thereby activating the CARD8 inflammasome, leading to the clearance of latent HIV-1 in patient CD4(+) T-cells after viral reactivation; in contrast, HIV-1 can evade CARD8-sensing when its protease remains inactive in infected cells prior to viral budding. In terms of biological role, multifunctional enzyme that converts the viral RNA genome into dsDNA in the cytoplasm, shortly after virus entry into the cell. This enzyme displays a DNA polymerase activity that can copy either DNA or RNA templates, and a ribonuclease H (RNase H) activity that cleaves the RNA strand of RNA-DNA heteroduplexes in a partially processive 3' to 5' endonucleasic mode. Conversion of viral genomic RNA into dsDNA requires many steps. A tRNA(3)-Lys binds to the primer-binding site (PBS) situated at the 5'-end of the viral RNA. RT uses the 3' end of the tRNA primer to perform a short round of RNA-dependent minus-strand DNA synthesis. The reading proceeds through the U5 region and ends after the repeated (R) region which is present at both ends of viral RNA. The portion of the RNA-DNA heteroduplex is digested by the RNase H, resulting in a ssDNA product attached to the tRNA primer. This ssDNA/tRNA hybridizes with the identical R region situated at the 3' end of viral RNA. This template exchange, known as minus-strand DNA strong stop transfer, can be either intra- or intermolecular. RT uses the 3' end of this newly synthesized short ssDNA to perform the RNA-dependent minus-strand DNA synthesis of the whole template. RNase H digests the RNA template except for two polypurine tracts (PPTs) situated at the 5'-end and near the center of the genome. It is not clear if both polymerase and RNase H activities are simultaneous. RNase H probably can proceed both in a polymerase-dependent (RNA cut into small fragments by the same RT performing DNA synthesis) and a polymerase-independent mode (cleavage of remaining RNA fragments by free RTs). Secondly, RT performs DNA-directed plus-strand DNA synthesis using the PPTs that have not been removed by RNase H as primers. PPTs and tRNA primers are then removed by RNase H. The 3' and 5' ssDNA PBS regions hybridize to form a circular dsDNA intermediate. Strand displacement synthesis by RT to the PBS and PPT ends produces a blunt ended, linear dsDNA copy of the viral genome that includes long terminal repeats (LTRs) at both ends. Catalyzes viral DNA integration into the host chromosome, by performing a series of DNA cutting and joining reactions. This enzyme activity takes place after virion entry into a cell and reverse transcription of the RNA genome in dsDNA. The first step in the integration process is 3' processing. This step requires a complex comprising the viral genome, matrix protein, Vpr and integrase. This complex is called the pre-integration complex (PIC). The integrase protein removes 2 nucleotides from each 3' end of the viral DNA, leaving recessed CA OH's at the 3' ends. In the second step, the PIC enters cell nucleus. This process is mediated through integrase and Vpr proteins, and allows the virus to infect a non dividing cell. This ability to enter the nucleus is specific of lentiviruses, other retroviruses cannot and rely on cell division to access cell chromosomes. In the third step, termed strand transfer, the integrase protein joins the previously processed 3' ends to the 5' ends of strands of target cellular DNA at the site of integration. The 5'-ends are produced by integrase-catalyzed staggered cuts, 5 bp apart. A Y-shaped, gapped, recombination intermediate results, with the 5'-ends of the viral DNA strands and the 3' ends of target DNA strands remaining unjoined, flanking a gap of 5 bp. The last step is viral DNA integration into host chromosome. This involves host DNA repair synthesis in which the 5 bp gaps between the unjoined strands are filled in and then ligated. Since this process occurs at both cuts flanking the HIV genome, a 5 bp duplication of host DNA is produced at the ends of HIV-1 integration. Alternatively, Integrase may catalyze the excision of viral DNA just after strand transfer, this is termed disintegration. The protein is Gag-Pol polyprotein (gag-pol) of Homo sapiens (Human).